We begin with the raw amino-acid sequence, 128 residues long: Organic solute transporter subunit beta (128 aa).

The Extracellular portion of the chain corresponds to 1-30; that stretch reads MDHSAEKAAANAEVPQELLEEMLWYFRAED. The helical transmembrane segment at 31 to 53 threads the bilayer; it reads AAPWNYSILVLAVLVVMTSMFLL. The Cytoplasmic portion of the chain corresponds to 54 to 128; the sequence is RRSILANRNR…FLPDPQETES (75 aa). Disordered stretches follow at residues 61–80 and 101–128; these read RNRKKQPQDKETPEDLHLDD and PDLAPGEPELKEKDSSLVFLPDPQETES. Composition is skewed to basic and acidic residues over residues 66-80 and 101-115; these read QPQDKETPEDLHLDD and PDLAPGEPELKEKDS. Position 116 is a phosphoserine (serine 116).

It belongs to the OST-beta family. In terms of assembly, interacts with SLC51A. The Ost-alpha/Ost-beta complex is a heterodimer composed of alpha (SLC51A) and beta (SLC51B) subunit; induces the transport of SLC51A from the endoplasmic reticulum to the plasma membrane. Present at high level in ileum. In ileum, it is restricted to the apical domain on the mature villus enterocytes with little detectable expression in the goblet cells or crypt enterocytes (at protein level). Expressed in kidney but not in heart, brain, liver, spleen, embryo, lung, thymus, ovary nor testis.

Its subcellular location is the cell membrane. The catalysed reaction is taurocholate(out) = taurocholate(in). It catalyses the reaction tauroursodeoxycholate(out) = tauroursodeoxycholate(in). The enzyme catalyses glycoursodeoxycholate(out) = glycoursodeoxycholate(in). It carries out the reaction glycocholate(out) = glycocholate(in). The catalysed reaction is taurochenodeoxycholate(out) = taurochenodeoxycholate(in). It catalyses the reaction glycochenodeoxycholate(out) = glycochenodeoxycholate(in). The enzyme catalyses taurodeoxycholate(out) = taurodeoxycholate(in). It carries out the reaction glycodeoxycholate(out) = glycodeoxycholate(in). The catalysed reaction is prostaglandin E2(out) = prostaglandin E2(in). It catalyses the reaction estrone 3-sulfate(out) = estrone 3-sulfate(in). The enzyme catalyses dehydroepiandrosterone 3-sulfate(out) = dehydroepiandrosterone 3-sulfate(in). Essential component of the Ost-alpha/Ost-beta complex, a heterodimer that acts as the intestinal basolateral transporter responsible for bile acid export from enterocytes into portal blood. The Ost-alpha/Ost-beta complex efficiently transports the major species of bile acids (taurocholate). Taurine conjugates are transported more efficiently across the basolateral membrane than glycine-conjugated bile acids. Can also transport steroids such as estrone 3-sulfate and dehydroepiandrosterone 3-sulfate, therefore playing a role in the enterohepatic circulation of sterols. Able to transport eicosanoids such as prostaglandin E2. Modulates SLC51A glycosylation, membrane trafficking and stability activities. This is Organic solute transporter subunit beta (Slc51b) from Mus musculus (Mouse).